The chain runs to 1159 residues: DNA-directed RNA polymerase subunit beta (1159 aa).

Belongs to the RNA polymerase beta chain family. In terms of assembly, the RNAP catalytic core consists of 2 alpha, 1 beta, 1 beta' and 1 omega subunit. When a sigma factor is associated with the core the holoenzyme is formed, which can initiate transcription.

It catalyses the reaction RNA(n) + a ribonucleoside 5'-triphosphate = RNA(n+1) + diphosphate. Its function is as follows. DNA-dependent RNA polymerase catalyzes the transcription of DNA into RNA using the four ribonucleoside triphosphates as substrates. This chain is DNA-directed RNA polymerase subunit beta, found in Deinococcus radiodurans (strain ATCC 13939 / DSM 20539 / JCM 16871 / CCUG 27074 / LMG 4051 / NBRC 15346 / NCIMB 9279 / VKM B-1422 / R1).